A 420-amino-acid polypeptide reads, in one-letter code: Ribulose bisphosphate carboxylase large chain (420 aa).

Substrate contacts are provided by N103 and T153. The active-site Proton acceptor is K155. K157 is a binding site for substrate. Mg(2+) is bound by residues K181, D183, and E184. K181 carries the post-translational modification N6-carboxylysine. The active-site Proton acceptor is the H274. R275, H307, and S359 together coordinate substrate.

Belongs to the RuBisCO large chain family. Type I subfamily. Heterohexadecamer of 8 large chains and 8 small chains; disulfide-linked. The disulfide link is formed within the large subunit homodimers. The cofactor is Mg(2+). In terms of processing, the disulfide bond which can form in the large chain dimeric partners within the hexadecamer appears to be associated with oxidative stress and protein turnover.

The protein localises to the plastid. It is found in the chloroplast. It carries out the reaction 2 (2R)-3-phosphoglycerate + 2 H(+) = D-ribulose 1,5-bisphosphate + CO2 + H2O. It catalyses the reaction D-ribulose 1,5-bisphosphate + O2 = 2-phosphoglycolate + (2R)-3-phosphoglycerate + 2 H(+). Its function is as follows. RuBisCO catalyzes two reactions: the carboxylation of D-ribulose 1,5-bisphosphate, the primary event in carbon dioxide fixation, as well as the oxidative fragmentation of the pentose substrate in the photorespiration process. Both reactions occur simultaneously and in competition at the same active site. The polypeptide is Ribulose bisphosphate carboxylase large chain (Anemia mexicana (Mexican fern)).